Reading from the N-terminus, the 781-residue chain is Ubiquitin carboxyl-terminal hydrolase 14 (781 aa).

The UBP-type zinc-finger motif lies at 169–279 (STCPHTENFQ…SALQIYGINI (111 aa)). Zn(2+)-binding residues include Cys171, His173, Cys192, Cys195, Cys204, Cys207, Cys212, His224, His228, His235, Cys253, and Cys256. In terms of domain architecture, USP spans 323-781 (CGLINLGNSC…NGYIYFYTRC (459 aa)). Cys332 acts as the Nucleophile in catalysis. UBA domains are found at residues 576–626 (DEDE…LFQH) and 649–689 (EVDE…VFNN). The Proton acceptor role is filled by His737.

This sequence belongs to the peptidase C19 family.

The protein resides in the cytoplasm. Its subcellular location is the nucleus. It catalyses the reaction Thiol-dependent hydrolysis of ester, thioester, amide, peptide and isopeptide bonds formed by the C-terminal Gly of ubiquitin (a 76-residue protein attached to proteins as an intracellular targeting signal).. Functionally, required for the adaptation to the presence of glucose in the growth medium; mediates the degradation of enzymes involved in gluconeogenesis when cells are shifted to glucose-containing medium. Required for proteasome-dependent catabolite degradation of fructose-1,6-bisphosphatase (FBP1). Accelerates proteasomal breakdown of ubiquitinated proteins as it disassembles free ubiquitin chains that would compete with ubiquitinated proteins to bind to the proteasome. In Saccharomyces cerevisiae (strain ATCC 204508 / S288c) (Baker's yeast), this protein is Ubiquitin carboxyl-terminal hydrolase 14 (UBP14).